The following is a 209-amino-acid chain: Large ribosomal subunit protein uL3 (209 aa).

Q150 carries the post-translational modification N5-methylglutamine.

It belongs to the universal ribosomal protein uL3 family. As to quaternary structure, part of the 50S ribosomal subunit. Forms a cluster with proteins L14 and L19. Post-translationally, methylated by PrmB.

In terms of biological role, one of the primary rRNA binding proteins, it binds directly near the 3'-end of the 23S rRNA, where it nucleates assembly of the 50S subunit. The chain is Large ribosomal subunit protein uL3 from Escherichia coli O139:H28 (strain E24377A / ETEC).